The primary structure comprises 265 residues: Capsule polysaccharide export inner-membrane protein BexB (265 aa).

The next 6 helical transmembrane spans lie at 37-57 (IGFF…VMMW), 64-84 (KFST…AMMW), 118-138 (LLEV…LVMI), 151-171 (LIAW…ICAI), 178-198 (FGKI…AFFF), and 235-255 (ESIG…LVMV). Positions 37–258 (IGFFWLFVEP…LLGLVMVKNF (222 aa)) constitute an ABC transmembrane type-2 domain.

Belongs to the ABC-2 integral membrane protein family.

It localises to the cell inner membrane. May form an ATP-driven capsule polysaccharide export apparatus, in association with the BexA, BexC and BexD proteins. The polypeptide is Capsule polysaccharide export inner-membrane protein BexB (bexB) (Haemophilus influenzae).